The sequence spans 352 residues: Neutral protease 2 (352 aa).

The N-terminal stretch at 1–19 is a signal peptide; the sequence is MRVTTLSTALFALASTAVS. Positions 20–175 are excised as a propeptide; that stretch reads APTAGSSSPG…TKALSQLTRR (156 aa). 3 disulfides stabilise this stretch: cysteine 181-cysteine 253, cysteine 260-cysteine 278, and cysteine 292-cysteine 352. Histidine 303 contributes to the Zn(2+) binding site. The active site involves glutamate 304. Histidine 307 and aspartate 318 together coordinate Zn(2+).

The protein belongs to the peptidase M35 family. Zn(2+) serves as cofactor.

It carries out the reaction Preferential cleavage of bonds with hydrophobic residues in P1'. Also 3-Asn-|-Gln-4 and 8-Gly-|-Ser-9 bonds in insulin B chain.. In terms of biological role, metalloprotease that shows high activities on basic nuclear substrates such as histone and protamine. The sequence is that of Neutral protease 2 from Aspergillus oryzae (strain ATCC 42149 / RIB 40) (Yellow koji mold).